A 236-amino-acid chain; its full sequence is Protein-L-isoaspartate O-methyltransferase 1 (236 aa).

S85 is a catalytic residue.

This sequence belongs to the methyltransferase superfamily. L-isoaspartyl/D-aspartyl protein methyltransferase family.

Its subcellular location is the cytoplasm. The enzyme catalyses [protein]-L-isoaspartate + S-adenosyl-L-methionine = [protein]-L-isoaspartate alpha-methyl ester + S-adenosyl-L-homocysteine. In terms of biological role, catalyzes the methyl esterification of L-isoaspartyl residues in peptides and proteins that result from spontaneous decomposition of normal L-aspartyl and L-asparaginyl residues. It plays a role in the repair and/or degradation of damaged proteins. This Polaromonas sp. (strain JS666 / ATCC BAA-500) protein is Protein-L-isoaspartate O-methyltransferase 1.